The sequence spans 317 residues: Nitrilase (317 aa).

Positions 5–280 (VKVAVVQAEP…DGVIISELDM (276 aa)) constitute a CN hydrolase domain. The Proton acceptor role is filled by Glu45. Lys125 is a catalytic residue. Residue Cys165 is the Nucleophile of the active site.

Belongs to the carbon-nitrogen hydrolase superfamily. Nitrilase family.

The enzyme catalyses a nitrile + 2 H2O = a carboxylate + NH4(+). Its function is as follows. Nitrilase that hydrolyzes preferentially 4-cyanopyridine. Is also able to hydrolyze some aliphatic nitriles, such as phenylacetonitrile. The chain is Nitrilase from Meyerozyma guilliermondii (strain ATCC 6260 / CBS 566 / DSM 6381 / JCM 1539 / NBRC 10279 / NRRL Y-324) (Yeast).